Reading from the N-terminus, the 159-residue chain is S-ribosylhomocysteine lyase (159 aa).

3 residues coordinate Fe cation: His53, His57, and Cys124.

The protein belongs to the LuxS family. In terms of assembly, homodimer. Fe cation is required as a cofactor.

It catalyses the reaction S-(5-deoxy-D-ribos-5-yl)-L-homocysteine = (S)-4,5-dihydroxypentane-2,3-dione + L-homocysteine. Functionally, involved in the synthesis of autoinducer 2 (AI-2) which is secreted by bacteria and is used to communicate both the cell density and the metabolic potential of the environment. The regulation of gene expression in response to changes in cell density is called quorum sensing. Catalyzes the transformation of S-ribosylhomocysteine (RHC) to homocysteine (HC) and 4,5-dihydroxy-2,3-pentadione (DPD). The protein is S-ribosylhomocysteine lyase of Porphyromonas gingivalis (strain ATCC BAA-308 / W83).